Reading from the N-terminus, the 673-residue chain is Glycine--tRNA ligase beta subunit (673 aa).

This sequence belongs to the class-II aminoacyl-tRNA synthetase family. In terms of assembly, tetramer of two alpha and two beta subunits.

The protein localises to the cytoplasm. It carries out the reaction tRNA(Gly) + glycine + ATP = glycyl-tRNA(Gly) + AMP + diphosphate. This Lactococcus lactis subsp. cremoris (strain MG1363) protein is Glycine--tRNA ligase beta subunit.